The chain runs to 222 residues: Germin-like protein subfamily 1 member 13 (222 aa).

The N-terminal stretch at 1 to 18 (MRVSKSLILITLSALVIS) is a signal peptide. A disulfide bond links Cys32 and Cys49. The region spanning 63-214 (SGLNQAGSTN…AFQLDVNIVE (152 aa)) is the Cupin type-1 domain. An N-linked (GlcNAc...) asparagine glycan is attached at Asn78. Mn(2+)-binding residues include His111, His113, Glu118, and His160.

Belongs to the germin family. As to quaternary structure, oligomer (believed to be a pentamer but probably hexamer).

Its subcellular location is the secreted. The protein resides in the extracellular space. It is found in the apoplast. In terms of biological role, may play a role in plant defense. Probably has no oxalate oxidase activity even if the active site is conserved. This chain is Germin-like protein subfamily 1 member 13 (GLP6), found in Arabidopsis thaliana (Mouse-ear cress).